Consider the following 649-residue polypeptide: Glucan endo-1,3-beta-glucosidase btgC (649 aa).

Disordered stretches follow at residues 1–50 (MGDR…AHTH) and 110–224 (YHTT…AGGA). The Cytoplasmic segment spans residues 1-274 (MGDRSEQYGD…PRPSGASRKR (274 aa)). Residues 144-157 (GSSAALSAAGAPAG) show a composition bias toward low complexity. The segment covering 198–208 (NPDDILDDGDD) has biased composition (acidic residues). The helical; Signal-anchor for type II membrane protein transmembrane segment at 275-295 (GWIIGGILAFIVIGAIVGGAV) threads the bilayer. Topologically, residues 296 to 649 (GGTLGNRRSE…IPDCGGKTAA (354 aa)) are extracellular. Positions 301–329 (NRRSETASESSEVSADDDTETNGDLDKNS) are disordered. Over residues 314 to 323 (SADDDTETNG) the composition is skewed to acidic residues. N-linked (GlcNAc...) asparagine glycosylation is found at N369, N392, and N420. The active-site Proton donor is the E452. The Nucleophile role is filled by E551. A glycan (N-linked (GlcNAc...) asparagine) is linked at N596.

The protein belongs to the glycosyl hydrolase 17 family.

It is found in the cell membrane. It catalyses the reaction Hydrolysis of (1-&gt;3)-beta-D-glucosidic linkages in (1-&gt;3)-beta-D-glucans.. In terms of biological role, glucanases play a role in cell expansion during growth, in cell-cell fusion during mating, and in spore release during sporulation. This enzyme may be involved in beta-glucan degradation. Active on laminarin and lichenan. This is Glucan endo-1,3-beta-glucosidase btgC (btgC) from Emericella nidulans (strain FGSC A4 / ATCC 38163 / CBS 112.46 / NRRL 194 / M139) (Aspergillus nidulans).